A 410-amino-acid chain; its full sequence is Elongation factor Tu, chloroplastic (410 aa).

The tr-type G domain occupies 10 to 215 (KPHINIGTIG…MVDKYFPTPE (206 aa)). Residues 19-26 (GHVDHGKT) form a G1 region. 19 to 26 (GHVDHGKT) is a GTP binding site. Residue T26 participates in Mg(2+) binding. The G2 stretch occupies residues 61 to 65 (GITIN). The segment at 82-85 (DCPG) is G3. GTP-binding positions include 82 to 86 (DCPGH) and 137 to 140 (NKAD). Positions 137–140 (NKAD) are G4. The tract at residues 175-177 (SAL) is G5.

The protein belongs to the TRAFAC class translation factor GTPase superfamily. Classic translation factor GTPase family. EF-Tu/EF-1A subfamily.

It localises to the plastid. Its subcellular location is the chloroplast. It catalyses the reaction GTP + H2O = GDP + phosphate + H(+). Its function is as follows. GTP hydrolase that promotes the GTP-dependent binding of aminoacyl-tRNA to the A-site of ribosomes during protein biosynthesis. The sequence is that of Elongation factor Tu, chloroplastic (tufA) from Cyanidium caldarium (Red alga).